The primary structure comprises 1692 residues: Adenylate cyclase (1692 aa).

Disordered regions lie at residues 1-22 (MDQS…FKTG) and 103-142 (SLSD…YKEN). Residues 120-132 (ESSEKSEVPRDTR) are compositionally biased toward basic and acidic residues. A required for interaction with gpa2 region spans residues 174-195 (FTNLTFPEPISDDSDSVEFQRD). One can recognise a Ras-associating domain in the interval 292–380 (KEFFLRVYRD…SDEEINEEDN (89 aa)). LRR repeat units follow at residues 430–450 (ELIS…DFME), 454–474 (KLKR…PITA), 477–498 (QLEV…IFSG), 503–524 (SLKE…TRYL), 526–547 (NLTY…ITEL), 549–570 (QLET…IGSL), 572–594 (KLKH…IGLL), 596–617 (NLET…SECP), 618–639 (KLNS…NPSA), 660–681 (NLVY…VIET), 684–705 (NVET…ISAM), 707–729 (NLKY…GKLK), 730–751 (HLVH…VWQV), 753–774 (SLKV…VATS), 783–805 (QLKI…EFVM), 807–827 (TVEE…TALE), 831–852 (CLKV…FFQN), 855–876 (DLKH…STAQ), 878–899 (LLET…EALS), 901–922 (SLRF…KAEK), and 930–951 (QLEY…EDTN). One can recognise a PPM-type phosphatase domain in the interval 995–1275 (RYGVCGYLSR…KNVLVVIVEL (281 aa)). The Guanylate cyclase domain maps to 1332 to 1469 (AMVFTDIKNS…PVVNRTSRVV (138 aa)). Asp1337 and Asp1380 together coordinate Mg(2+). Residues Asp1337 and Asp1380 each coordinate Mn(2+). Positions 1585–1597 (SDSKSVHGEEGGS) are enriched in basic and acidic residues. Residues 1585 to 1614 (SDSKSVHGEEGGSGKRSVSSLRNVSPSEST) are disordered. Polar residues predominate over residues 1600 to 1614 (RSVSSLRNVSPSEST).

It belongs to the adenylyl cyclase class-3 family. Interacts (via N-terminus) with gpa2; the interaction is direct and serves to activate adenylate cyclase and cAMP-PKA signaling, to repress sexual development and gluconeogenesis. Interacts with git1. It depends on Mn(2+) as a cofactor.

It localises to the cytoplasm. The enzyme catalyses ATP = 3',5'-cyclic AMP + diphosphate. Activated by binding G protein gpa2. Activated by git1. In contrast to yeast cyclase, S.pombe cyclase is not likely to be regulated by RAS proteins. Acts in glucose-induced cAMP signaling by catalyzing the synthesis of the second messenger, cAMP to activate PKA signaling and repress sexual development and gluconeogenesis. In Schizosaccharomyces pombe (strain 972 / ATCC 24843) (Fission yeast), this protein is Adenylate cyclase.